The sequence spans 397 residues: Aurora kinase A (397 aa).

Positions 1-118 (MDRCKENCVS…SIQKTEDSKK (118 aa)) are disordered. Composition is skewed to polar residues over residues 29–55 (QIPS…SQRV) and 84–102 (RLSN…SGNN). Phosphoserine is present on residues serine 40 and serine 50. A compositionally biased stretch (basic and acidic residues) spans 103–118 (SEKEQTSIQKTEDSKK). One can recognise a Protein kinase domain in the interval 126-376 (FDIGRPLGKG…LAEVLEHPWI (251 aa)). Residues lysine 136, lysine 155, and 203–206 (LEYA) contribute to the ATP site. Residue aspartate 249 is the Proton acceptor of the active site. Residue lysine 251 forms a Glycyl lysine isopeptide (Lys-Gly) (interchain with G-Cter in SUMO2) linkage. ATP-binding positions include 253-254 (EN) and aspartate 267. Residues 273 to 286 (HAPSSRRTTLCGTL) are activation segment. 2 positions are modified to phosphothreonine: threonine 280 and threonine 281. Residue serine 335 is modified to Phosphoserine; by PKA and PAK. Residues 378 to 387 (ANSSKPPTGH) show a composition bias toward polar residues. Residues 378-397 (ANSSKPPTGHNSKEATSKSS) form a disordered region. The segment covering 388–397 (NSKEATSKSS) has biased composition (basic and acidic residues).

The protein belongs to the protein kinase superfamily. Ser/Thr protein kinase family. Aurora subfamily. In terms of assembly, part of a complex composed of NEDD9, AURKA and CTTN; within the complex NEDD9 acts as a scaffold protein and is required for complex formation. Identified in a complex with AUNIP and NIN. Interacts with CPEB1, JTB, TACC1, TPX2, PPP2CA, as well as with the protein phosphatase type 1 (PP1) isoforms PPP1CA, PPP1CB and PPP1CC. Also interacts with its substrates ARHGEF2, BORA, KIF2A, PARD3, and p53/TP53. Interaction with BORA promotes phosphorylation of PLK1. Interacts with FBXL7 and CIMAP3. Interacts with GADD45A, competing with its oligomerization. Interacts (via C-terminus) with AUNIP (via C-terminus). Interacts with SIRT2. Interacts with FRY; this interaction facilitates AURKA-mediated PLK1 phosphorylation. Interacts with MYCN; interaction is phospho-independent and triggers AURKA activation; AURKA competes with FBXW7 for binding to unphosphorylated MYCN but not for binding to phosphorylated MYCN. Interacts with HNRNPU. Interacts with AAAS. Interacts with KLHL18 and CUL3. Interacts with FOXP1. Interacts with HDAC6; AURKA-mediated phosphorylation of HDAC6 promotes deacetylation of alpha-tubulin. In terms of processing, activated by phosphorylation at Thr-281; this brings about a change in the conformation of the activation segment. Phosphorylation at Thr-281 varies during the cell cycle and is highest during M phase. Autophosphorylated at Thr-281 upon TPX2 binding. Thr-281 can be phosphorylated by several kinases, including PAK and PKA. Protein phosphatase type 1 (PP1) binds AURKA and inhibits its activity by dephosphorylating Thr-281 during mitosis. Phosphorylation at Ser-335 decreases the kinase activity. PPP2CA controls degradation by dephosphorylating Ser-52 at the end of mitosis. Phosphorylated in embryonic brain neurons. Post-translationally, ubiquitinated by CHFR, leading to its degradation by the proteasome. Ubiquitinated by the anaphase-promoting complex (APC), leading to its degradation by the proteasome. Ubiquitinated by the E3 ubiquitin-protein ligase complex SCF(FBXL7) during mitosis, leading to its degradation by the proteasome. Ubiquitinated by the CUL3-KLHL18 ligase leading to its activation at the centrosome which is required for initiating mitotic entry. Ubiquitination mediated by CUL3-KLHL18 ligase does not lead to its degradation by the proteasome. In terms of tissue distribution, detected in neurons in brain cortex and hippocampus (at protein level). Expressed in mammary gland and tumor.

It is found in the cytoplasm. The protein localises to the cytoskeleton. Its subcellular location is the microtubule organizing center. It localises to the centrosome. The protein resides in the spindle pole. It is found in the centriole. The protein localises to the cell projection. Its subcellular location is the neuron projection. It localises to the cilium. The protein resides in the cilium basal body. It is found in the basolateral cell membrane. It carries out the reaction L-seryl-[protein] + ATP = O-phospho-L-seryl-[protein] + ADP + H(+). The catalysed reaction is L-threonyl-[protein] + ATP = O-phospho-L-threonyl-[protein] + ADP + H(+). Its activity is regulated as follows. Activation of CDK1, appears to be an upstream event of AURKA activation. Phosphatase inhibitor-2 (PPP1R2) and TPX2 act also as activators. Inactivated by the G2 checkpoint. Inhibited by GADD45A and p53/TP53, and through dephosphorylation by protein phosphatase type 1 (PP1). MLN8054 is also a potent and selective inhibitor. Activated during the early phase of cilia disassembly in the presence of FBXL7 and CIMAP3. Inhibited by the small molecule inhibitor VX-680. Its function is as follows. Mitotic serine/threonine kinase that contributes to the regulation of cell cycle progression. Associates with the centrosome and the spindle microtubules during mitosis and plays a critical role in various mitotic events including the establishment of mitotic spindle, centrosome duplication, centrosome separation as well as maturation, chromosomal alignment, spindle assembly checkpoint, and cytokinesis. Required for normal spindle positioning during mitosis and for the localization of NUMA1 and DCTN1 to the cell cortex during metaphase. Required for initial activation of CDK1 at centrosomes. Phosphorylates numerous target proteins, including ARHGEF2, BORA, BRCA1, CDC25B, DLGP5, HDAC6, KIF2A, LATS2, NDEL1, PARD3, PPP1R2, PLK1, RASSF1, TACC3, p53/TP53 and TPX2. Phosphorylates MCRS1 which is required for MCRS1-mediated kinetochore fiber assembly and mitotic progression. Regulates KIF2A tubulin depolymerase activity. Required for normal axon formation. Plays a role in microtubule remodeling during neurite extension. Important for microtubule formation and/or stabilization. Also acts as a key regulatory component of the p53/TP53 pathway, and particularly the checkpoint-response pathways critical for oncogenic transformation of cells, by phosphorylating and stabilizating p53/TP53. Phosphorylates its own inhibitors, the protein phosphatase type 1 (PP1) isoforms, to inhibit their activity. Inhibits cilia outgrowth. Required for cilia disassembly via phosphorylation of HDAC6 and subsequent deacetylation of alpha-tubulin. Regulates protein levels of the anti-apoptosis protein BIRC5 by suppressing the expression of the SCF(FBXL7) E3 ubiquitin-protein ligase substrate adapter FBXL7 through the phosphorylation of the transcription factor FOXP1. This chain is Aurora kinase A, found in Rattus norvegicus (Rat).